Reading from the N-terminus, the 315-residue chain is 4-hydroxy-3-methylbut-2-enyl diphosphate reductase (315 aa).

Residue cysteine 12 participates in [4Fe-4S] cluster binding. Residues histidine 43 and histidine 81 each contribute to the (2E)-4-hydroxy-3-methylbut-2-enyl diphosphate site. Dimethylallyl diphosphate is bound by residues histidine 43 and histidine 81. The isopentenyl diphosphate site is built by histidine 43 and histidine 81. Cysteine 103 contacts [4Fe-4S] cluster. Residue histidine 131 coordinates (2E)-4-hydroxy-3-methylbut-2-enyl diphosphate. Histidine 131 lines the dimethylallyl diphosphate pocket. Histidine 131 contacts isopentenyl diphosphate. The active-site Proton donor is the glutamate 133. Threonine 170 provides a ligand contact to (2E)-4-hydroxy-3-methylbut-2-enyl diphosphate. Cysteine 198 serves as a coordination point for [4Fe-4S] cluster. (2E)-4-hydroxy-3-methylbut-2-enyl diphosphate contacts are provided by serine 226, asparagine 228, and serine 271. Dimethylallyl diphosphate-binding residues include serine 226, asparagine 228, and serine 271. Residues serine 226, asparagine 228, and serine 271 each contribute to the isopentenyl diphosphate site.

This sequence belongs to the IspH family. It depends on [4Fe-4S] cluster as a cofactor.

It carries out the reaction isopentenyl diphosphate + 2 oxidized [2Fe-2S]-[ferredoxin] + H2O = (2E)-4-hydroxy-3-methylbut-2-enyl diphosphate + 2 reduced [2Fe-2S]-[ferredoxin] + 2 H(+). It catalyses the reaction dimethylallyl diphosphate + 2 oxidized [2Fe-2S]-[ferredoxin] + H2O = (2E)-4-hydroxy-3-methylbut-2-enyl diphosphate + 2 reduced [2Fe-2S]-[ferredoxin] + 2 H(+). It participates in isoprenoid biosynthesis; dimethylallyl diphosphate biosynthesis; dimethylallyl diphosphate from (2E)-4-hydroxy-3-methylbutenyl diphosphate: step 1/1. The protein operates within isoprenoid biosynthesis; isopentenyl diphosphate biosynthesis via DXP pathway; isopentenyl diphosphate from 1-deoxy-D-xylulose 5-phosphate: step 6/6. Catalyzes the conversion of 1-hydroxy-2-methyl-2-(E)-butenyl 4-diphosphate (HMBPP) into a mixture of isopentenyl diphosphate (IPP) and dimethylallyl diphosphate (DMAPP). Acts in the terminal step of the DOXP/MEP pathway for isoprenoid precursor biosynthesis. The protein is 4-hydroxy-3-methylbut-2-enyl diphosphate reductase of Geobacillus sp. (strain WCH70).